We begin with the raw amino-acid sequence, 359 residues long: Patr class I histocompatibility antigen, B-1 alpha chain (359 aa).

An N-terminal signal peptide occupies residues 1–20 (APRTVLLLLSAALALTETWA). An alpha-1 region spans residues 21 to 110 (GSHSMRYFYT…ALRYYNQSEA (90 aa)). Topologically, residues 21 to 305 (GSHSMRYFYT…PSSQSTIPIV (285 aa)) are extracellular. Asn-106 carries an N-linked (GlcNAc...) asparagine glycan. The segment at 111–202 (GSHTWQTMYG…ENGKETLQRA (92 aa)) is alpha-2. 2 disulfide bridges follow: Cys-121/Cys-184 and Cys-223/Cys-279. An alpha-3 region spans residues 203-294 (DPPKTHVTHH…GLPKPLTLRW (92 aa)). Residues 205–291 (PKTHVTHHPI…QHEGLPKPLT (87 aa)) form the Ig-like C1-type domain. Positions 295–305 (EPSSQSTIPIV) are connecting peptide. A helical transmembrane segment spans residues 306 to 329 (GIVAGLAVLVVTVAVVAVVAAVMC). Topologically, residues 330–359 (RRKSSGGKGGSYSQAASSDSAQGSDVSLTA) are cytoplasmic. A disordered region spans residues 332–359 (KSSGGKGGSYSQAASSDSAQGSDVSLTA). Over residues 340–359 (SYSQAASSDSAQGSDVSLTA) the composition is skewed to low complexity. Residues Ser-353 and Ser-356 each carry the phosphoserine modification.

The protein belongs to the MHC class I family. Heterodimer of an alpha chain and a beta chain (beta-2-microglobulin).

The protein localises to the membrane. Its function is as follows. Involved in the presentation of foreign antigens to the immune system. This chain is Patr class I histocompatibility antigen, B-1 alpha chain, found in Pan troglodytes (Chimpanzee).